The primary structure comprises 182 residues: uncharacterized protein (182 aa).

Transmembrane regions (helical) follow at residues 58–78 (ILFGFMIIALISFNILLYVVY) and 81–101 (PVSITSIIAEILIIISMIIIW).

To M.jannaschii MJ0803.

The protein resides in the cell membrane. This is an uncharacterized protein from Methanocaldococcus jannaschii (strain ATCC 43067 / DSM 2661 / JAL-1 / JCM 10045 / NBRC 100440) (Methanococcus jannaschii).